A 791-amino-acid polypeptide reads, in one-letter code: Phenylalanine--tRNA ligase beta subunit (791 aa).

One can recognise a tRNA-binding domain in the interval 39–147; that stretch reads GDALGQVVVA…DDAPVGQALA (109 aa). Positions 400–475 constitute a B5 domain; sequence PQPASILLRR…RIHGYDRVPT (76 aa). The Mg(2+) site is built by D453, D459, E462, and E463. In terms of domain architecture, FDX-ACB spans 697-790; it reads SRYPSMRRDL…IEREHRARIR (94 aa).

The protein belongs to the phenylalanyl-tRNA synthetase beta subunit family. Type 1 subfamily. Tetramer of two alpha and two beta subunits. Mg(2+) serves as cofactor.

It localises to the cytoplasm. The catalysed reaction is tRNA(Phe) + L-phenylalanine + ATP = L-phenylalanyl-tRNA(Phe) + AMP + diphosphate + H(+). The sequence is that of Phenylalanine--tRNA ligase beta subunit from Xanthomonas campestris pv. campestris (strain 8004).